The following is a 432-amino-acid chain: Adenylosuccinate synthetase (432 aa).

Residues 12–18 and 40–42 each bind GTP; these read GDEGKGK and GHT. Residue D13 is the Proton acceptor of the active site. Mg(2+) contacts are provided by D13 and G40. IMP is bound by residues 13–16, 38–41, T126, R140, Q219, T234, and R300; these read DEGK and NAGH. The Proton donor role is filled by H41. Residue 296–302 coordinates substrate; it reads STTGRPR. Residues R302, 328–330, and 410–412 contribute to the GTP site; these read KLD and STG.

The protein belongs to the adenylosuccinate synthetase family. In terms of assembly, homodimer. Mg(2+) serves as cofactor.

It is found in the cytoplasm. It catalyses the reaction IMP + L-aspartate + GTP = N(6)-(1,2-dicarboxyethyl)-AMP + GDP + phosphate + 2 H(+). It functions in the pathway purine metabolism; AMP biosynthesis via de novo pathway; AMP from IMP: step 1/2. In terms of biological role, plays an important role in the de novo pathway of purine nucleotide biosynthesis. Catalyzes the first committed step in the biosynthesis of AMP from IMP. The polypeptide is Adenylosuccinate synthetase (Aquifex aeolicus (strain VF5)).